The following is a 269-amino-acid chain: Adenylate kinase (269 aa).

Residue 61–66 (GAGKGT) coordinates ATP. The NMP stretch occupies residues 81–110 (ATGDMLREQVARQTELGKAAKQIMDQGGLV). Residues threonine 82, arginine 87, 108-110 (GLV), 137-140 (GFPR), and glutamine 144 each bind AMP. An LID region spans residues 178 to 215 (GRLVHPASGRSYHKEFNPPKKPMTDDITGEPLIQRSDD). Residues arginine 179 and 188-189 (SY) each bind ATP. Residues arginine 212 and arginine 223 each coordinate AMP. Residue glutamine 251 coordinates ATP.

Belongs to the adenylate kinase family. AK2 subfamily. In terms of assembly, monomer.

It localises to the cytoplasm. The protein localises to the cytosol. It is found in the mitochondrion intermembrane space. The enzyme catalyses AMP + ATP = 2 ADP. Its function is as follows. Catalyzes the reversible transfer of the terminal phosphate group between ATP and AMP. Plays an important role in cellular energy homeostasis and in adenine nucleotide metabolism. Adenylate kinase activity is critical for regulation of the phosphate utilization and the AMP de novo biosynthesis pathways. The sequence is that of Adenylate kinase from Cryptococcus neoformans var. neoformans serotype D (strain B-3501A) (Filobasidiella neoformans).